The primary structure comprises 126 residues: MAFDKDAFLTALDSMSVMELNDLVKAIEEKFGVSAAAMAAPAAGGGAAAGGAAAEEKTEFNVVLAEAGSNKVAVIKAVREITGLGLKEAKDLVDGAPKNVKEGIAKADAEAAVKKLVEAGAKAELK.

Belongs to the bacterial ribosomal protein bL12 family. In terms of assembly, homodimer. Part of the ribosomal stalk of the 50S ribosomal subunit. Forms a multimeric L10(L12)X complex, where L10 forms an elongated spine to which 2 to 4 L12 dimers bind in a sequential fashion. Binds GTP-bound translation factors.

Its function is as follows. Forms part of the ribosomal stalk which helps the ribosome interact with GTP-bound translation factors. Is thus essential for accurate translation. This Paracidovorax citrulli (strain AAC00-1) (Acidovorax citrulli) protein is Large ribosomal subunit protein bL12.